Consider the following 475-residue polypeptide: Probable 5'-adenylylsulfate reductase 1, chloroplastic (475 aa).

The N-terminal 63 residues, 1–63, are a transit peptide targeting the chloroplast; that stretch reads MASATASISS…AAEPARQPVS (63 aa). Residues 72–327 are reductase domain; sequence AAPVAEDAAA…KAKECGLHKG (256 aa). One can recognise a Thioredoxin domain in the interval 341–475; that stretch reads HKAGGANGNG…SLLAFVNSLR (135 aa). Active-site nucleophile residues include cysteine 393 and cysteine 396. Cysteine 393 and cysteine 396 are oxidised to a cystine.

Belongs to the APS reductase family. [4Fe-4S] cluster is required as a cofactor.

Its subcellular location is the plastid. The protein resides in the chloroplast. It carries out the reaction glutathione disulfide + sulfite + AMP + 2 H(+) = adenosine 5'-phosphosulfate + 2 glutathione. Its function is as follows. Reduces sulfate for Cys biosynthesis. The protein is Probable 5'-adenylylsulfate reductase 1, chloroplastic (APR1) of Oryza sativa subsp. japonica (Rice).